We begin with the raw amino-acid sequence, 288 residues long: Protease HtpX homolog (288 aa).

2 helical membrane-spanning segments follow: residues 7-27 (TAVL…MLGG) and 29-49 (QGML…YWFS). His131 is a Zn(2+) binding site. Glu132 is an active-site residue. His135 lines the Zn(2+) pocket. The next 2 membrane-spanning stretches (helical) occupy residues 141-161 (ILIS…ANFA) and 177-197 (IASL…QMSI). Glu202 serves as a coordination point for Zn(2+).

It belongs to the peptidase M48B family. Zn(2+) is required as a cofactor.

It is found in the cell inner membrane. The protein is Protease HtpX homolog of Polynucleobacter necessarius subsp. necessarius (strain STIR1).